A 160-amino-acid polypeptide reads, in one-letter code: Transcriptional repressor NrdR (160 aa).

A zinc finger spans residues 3 to 34 (CPYCQCEDTQVKDSRPAEEGAVIRRRRVCSVC). The region spanning 49-139 (LLVLKKSGRR…VYRDFRNASD (91 aa)) is the ATP-cone domain.

This sequence belongs to the NrdR family. Requires Zn(2+) as cofactor.

In terms of biological role, negatively regulates transcription of bacterial ribonucleotide reductase nrd genes and operons by binding to NrdR-boxes. The sequence is that of Transcriptional repressor NrdR from Bartonella bacilliformis (strain ATCC 35685 / KC583 / Herrer 020/F12,63).